The following is a 212-amino-acid chain: MGMWSLGLGAVGAAIAGLILANTDFLLTKSAPATVDYLANADLKTIDGDERSLKAKALWEKSGAVIMAVRRPGUFLCREEASELSSLKPQLDELGVPLYAVVKENVGTEIQDFRPHFAGEIFLDEKQAFYGPQQRKMGGLGFIRLGVWQNFVRAWRAGYQGNMNGEGFILGGVFVMGSGGQGVLLEHREKEFGDKVSLESVLEAAKKVVVEK.

Residues Met3–Val101 are thioredoxin fold. Sec74 is a non-standard amino acid (selenocysteine). The Redox-active role is filled by Cys77.

It belongs to the peroxiredoxin-like PRXL2 family. PRXL2A subfamily. In terms of tissue distribution, expressed in kidney marrow.

The protein localises to the cytoplasm. Functionally, involved in redox regulation of the cell. Acts as an antioxidant. In Danio rerio (Zebrafish), this protein is Peroxiredoxin-like 2A (prxl2a).